A 161-amino-acid polypeptide reads, in one-letter code: Putative pre-16S rRNA nuclease (161 aa).

This sequence belongs to the YqgF nuclease family.

Its subcellular location is the cytoplasm. Its function is as follows. Could be a nuclease involved in processing of the 5'-end of pre-16S rRNA. This chain is Putative pre-16S rRNA nuclease, found in Methylocella silvestris (strain DSM 15510 / CIP 108128 / LMG 27833 / NCIMB 13906 / BL2).